The chain runs to 280 residues: Probable formate transporter (280 aa).

The next 6 helical transmembrane spans lie at 33 to 49 (LSFVAGAYIAFGGLLAE), 67 to 83 (LVFGGVFPVGLMLVVIA), 116 to 133 (SWVFNLVGALFVAYVLAY), 177 to 195 (FWRAIGCNWLVCLAVYLAV), 204 to 219 (SFGIWFPIMAFVCIGF), and 253 to 272 (LGNIVGGAIFVGCIYWFTYL).

The protein belongs to the FNT transporter (TC 1.A.16) family.

The protein resides in the cell membrane. May act as a formate transporter. The protein is Probable formate transporter (fdhC) of Methanobacterium formicicum.